The primary structure comprises 89 residues: Dolichol-phosphate mannose synthase subunit 3 (89 aa).

2 helical membrane-spanning segments follow: residues 7 to 27 and 33 to 53; these read ILSLLVAISAFWIGLLQAAII and WLLPIYFVVSLGCYGLLMVGV.

It belongs to the DPM3 family. Component of the dolichol-phosphate mannose (DPM) synthase complex composed of DPMS1, DPMS2 and DPMS3; in the complex interacts directly with DPMS1 and DPMS2.

The protein resides in the endoplasmic reticulum membrane. It participates in protein modification; protein glycosylation. Its function is as follows. Regulates the biosynthesis of dolichol phosphate-mannose. Regulatory subunit of the dolichol-phosphate mannose (DPM) synthase complex; essential for the ER localization and stable expression of DPMS1. This Arabidopsis thaliana (Mouse-ear cress) protein is Dolichol-phosphate mannose synthase subunit 3.